A 346-amino-acid polypeptide reads, in one-letter code: Histone PARylation factor 1 (346 aa).

Residue Met1 is modified to N-acetylmethionine. Positions 1–23 (MVGGGGKRRPGGEGPQCEKTTDV) are disordered. The residue at position 19 (Lys19) is an N6-acetyllysine. Residue Ser97 is modified to ADP-ribosylserine. N6-acetyllysine occurs at positions 186 and 233. PolyADP-ribosyl aspartic acid is present on Asp235. Tyr238 carries the ADP-ribosyltyrosine modification. Glu240 is subject to PolyADP-ribosyl glutamic acid. The tract at residues 242–346 (PETDADLKRI…SQENIDQLAA (105 aa)) is interaction with PARP1. The Proton donor role is filled by Glu284.

It belongs to the HPF1 family. As to quaternary structure, interacts with PARP1 (via the PARP catalytic domain). Interacts with PARP2 (via the PARP catalytic domain). Interacts with core nucleosomes in a PARP1- and PARP2-dependent manner.

It localises to the chromosome. It is found in the nucleus. Cofactor for serine ADP-ribosylation that confers serine specificity on PARP1 and PARP2 and plays a key role in DNA damage response. Initiates the repair of double-strand DNA breaks: recruited to DNA damage sites by PARP1 and PARP2 and switches the amino acid specificity of PARP1 and PARP2 from aspartate or glutamate to serine residues, licensing serine ADP-ribosylation of target proteins. Serine ADP-ribosylation of target proteins, such as histones, promotes decompaction of chromatin and the recruitment of repair factors leading to the reparation of DNA strand breaks. Serine ADP-ribosylation of proteins constitutes the primary form of ADP-ribosylation of proteins in response to DNA damage. HPF1 acts by completing the active site of PARP1 and PARP2: forms a composite active site composed of residues from HPF1 and PARP1 or PARP2. While HPF1 promotes the initiation of serine ADP-ribosylation, it restricts the polymerase activity of PARP1 and PARP2 in order to limit the length of poly-ADP-ribose chains. HPF1 also promotes tyrosine ADP-ribosylation, probably by conferring tyrosine specificity on PARP1. This chain is Histone PARylation factor 1, found in Homo sapiens (Human).